A 386-amino-acid polypeptide reads, in one-letter code: Succinate--CoA ligase [ADP-forming] subunit beta (386 aa).

The 236-residue stretch at 9-244 (KEILRKYGVP…HDEEDPLETR (236 aa)) folds into the ATP-grasp domain. Residues K46, 53–55 (GRG), E99, C102, and E107 each bind ATP. Mg(2+)-binding residues include N199 and D213. Residues N264 and 321–323 (GIM) each bind substrate.

Belongs to the succinate/malate CoA ligase beta subunit family. Heterotetramer of two alpha and two beta subunits. It depends on Mg(2+) as a cofactor.

The enzyme catalyses succinate + ATP + CoA = succinyl-CoA + ADP + phosphate. It catalyses the reaction GTP + succinate + CoA = succinyl-CoA + GDP + phosphate. It functions in the pathway carbohydrate metabolism; tricarboxylic acid cycle; succinate from succinyl-CoA (ligase route): step 1/1. Succinyl-CoA synthetase functions in the citric acid cycle (TCA), coupling the hydrolysis of succinyl-CoA to the synthesis of either ATP or GTP and thus represents the only step of substrate-level phosphorylation in the TCA. The beta subunit provides nucleotide specificity of the enzyme and binds the substrate succinate, while the binding sites for coenzyme A and phosphate are found in the alpha subunit. This chain is Succinate--CoA ligase [ADP-forming] subunit beta, found in Rickettsia conorii (strain ATCC VR-613 / Malish 7).